We begin with the raw amino-acid sequence, 125 residues long: Fumarate reductase subunit D (125 aa).

Transmembrane regions (helical) follow at residues 30–50 (FAMI…MGVI), 60–80 (VVSF…LALP), and 105–125 (IACY…IFML).

This sequence belongs to the FrdD family. In terms of assembly, part of an enzyme complex containing four subunits: a flavoprotein (FrdA), an iron-sulfur protein (FrdB), and two hydrophobic anchor proteins (FrdC and FrdD).

The protein localises to the cell inner membrane. Functionally, anchors the catalytic components of the fumarate reductase complex to the cell membrane, binds quinones. This Vibrio vulnificus (strain YJ016) protein is Fumarate reductase subunit D.